We begin with the raw amino-acid sequence, 155 residues long: MSDKEMNVESFNLDHTKVKAPYVRLAGIKTGDHGDAIHKYDLRICQPNKAHMEMPALHSLEHLMAELSRNHTDKMLDISPMGCQTGFYVTLINHDDYDDVLDLIDKTLNDVLVAKEVPACNEMQCGWAASHSLEGAQALARDLLAKRNEWNQVFA.

Residues His-58, His-62, and Cys-125 each contribute to the Fe cation site.

The protein belongs to the LuxS family. Homodimer. Fe cation is required as a cofactor.

The enzyme catalyses S-(5-deoxy-D-ribos-5-yl)-L-homocysteine = (S)-4,5-dihydroxypentane-2,3-dione + L-homocysteine. Involved in the synthesis of autoinducer 2 (AI-2) which is secreted by bacteria and is used to communicate both the cell density and the metabolic potential of the environment. The regulation of gene expression in response to changes in cell density is called quorum sensing. Catalyzes the transformation of S-ribosylhomocysteine (RHC) to homocysteine (HC) and 4,5-dihydroxy-2,3-pentadione (DPD). The sequence is that of S-ribosylhomocysteine lyase from Chromohalobacter salexigens (strain ATCC BAA-138 / DSM 3043 / CIP 106854 / NCIMB 13768 / 1H11).